The following is a 373-amino-acid chain: Phospho-N-acetylmuramoyl-pentapeptide-transferase (373 aa).

10 helical membrane-spanning segments follow: residues 28–48, 72–92, 94–114, 135–155, 177–197, 212–232, 252–272, 276–296, 301–321, and 350–370; these read LLTVITSLAFSIILGPRTIAY, TPTMGGVLILTSIGFSTLCWA, LANPYVWILMVVMVIFGAVGW, YFWLSVGALFVGSSLYYIASQ, IVPLSALPLGLGFIIFTYFVI, GLAILPVVFVAAGLGVFSYVS, VTIVCAAMIGSGLGFLWYNAH, VFMGDVGALALGAMLGTIAVM, IAFAIMGGLFVAEALSVILQV, and QVVVRFWIIAILLVVLGLMTL.

This sequence belongs to the glycosyltransferase 4 family. MraY subfamily. Mg(2+) serves as cofactor.

Its subcellular location is the cell inner membrane. The catalysed reaction is UDP-N-acetyl-alpha-D-muramoyl-L-alanyl-gamma-D-glutamyl-meso-2,6-diaminopimeloyl-D-alanyl-D-alanine + di-trans,octa-cis-undecaprenyl phosphate = di-trans,octa-cis-undecaprenyl diphospho-N-acetyl-alpha-D-muramoyl-L-alanyl-D-glutamyl-meso-2,6-diaminopimeloyl-D-alanyl-D-alanine + UMP. It participates in cell wall biogenesis; peptidoglycan biosynthesis. Functionally, catalyzes the initial step of the lipid cycle reactions in the biosynthesis of the cell wall peptidoglycan: transfers peptidoglycan precursor phospho-MurNAc-pentapeptide from UDP-MurNAc-pentapeptide onto the lipid carrier undecaprenyl phosphate, yielding undecaprenyl-pyrophosphoryl-MurNAc-pentapeptide, known as lipid I. The protein is Phospho-N-acetylmuramoyl-pentapeptide-transferase of Psychrobacter sp. (strain PRwf-1).